A 373-amino-acid polypeptide reads, in one-letter code: Opsin Rh1 (373 aa).

The Extracellular portion of the chain corresponds to 1–54 (MDSFAAVATQLGPHFAALSNGSVVDKVTPDMAHLISPYWNQFPAMDPIWAKILT). An N-linked (GlcNAc...) asparagine glycan is attached at asparagine 20. A helical membrane pass occupies residues 55-75 (AYMIIIGMISWCGNGVVIYIF). Over 76–86 (ATTKSLRTPAN) the chain is Cytoplasmic. A helical transmembrane segment spans residues 87–107 (LLVINLAISDFGIMITNTPMM). The Extracellular portion of the chain corresponds to 108–124 (GINLYFETWVLGPMMCD). Cysteines 123 and 200 form a disulfide. The helical transmembrane segment at 125–145 (IYAGLGSAFGCSSIWSMCMIS) threads the bilayer. Residues 146 to 162 (LDRYQVIVKGMAGRPMT) are Cytoplasmic-facing. Residues 163–183 (IPLALGKIAYIWFMSSIWCLA) traverse the membrane as a helical segment. At 184–219 (PVFGWSRYVPEGNLTSCGIDYLERDWNPRSYLIFYS) the chain is on the extracellular side. N-linked (GlcNAc...) asparagine glycosylation is present at asparagine 196. Residues 220 to 240 (IFVYYIPLFLICYSYWFIIAA) form a helical membrane-spanning segment. The Cytoplasmic segment spans residues 241-276 (VSAHEKAMREQAKKMNVKSLRSSEDADKSAEGKLAK). The chain crosses the membrane as a helical span at residues 277–297 (VALVTISLWFMAWTPYLVINC). Residues 298–308 (MGLFKFEGLTP) are Extracellular-facing. A helical membrane pass occupies residues 309–331 (LNTIWGACFAKSAACYNPIVYGI). Position 319 is an N6-(retinylidene)lysine (lysine 319). Residues 332-373 (SHPKYRLALKEKCPCCVFGKVDDGKSSEAQSQATNSEAESKA) are Cytoplasmic-facing. The segment at 354–373 (DGKSSEAQSQATNSEAESKA) is disordered. Residues 358–373 (SEAQSQATNSEAESKA) are compositionally biased toward polar residues.

It belongs to the G-protein coupled receptor 1 family. Opsin subfamily. In terms of processing, phosphorylated on some or all of the serine and threonine residues present in the C-terminal region.

It is found in the cell projection. Its subcellular location is the rhabdomere membrane. Its function is as follows. Visual pigments are the light-absorbing molecules that mediate vision. They consist of an apoprotein, opsin, covalently linked to cis-retinal. This Drosophila pseudoobscura pseudoobscura (Fruit fly) protein is Opsin Rh1 (ninaE).